We begin with the raw amino-acid sequence, 267 residues long: U6 snRNA phosphodiesterase 1 (267 aa).

Residues M1 to G13 are compositionally biased toward polar residues. The tract at residues M1–R74 is disordered. H122 (proton acceptor) is an active-site residue. H122–S124 is a binding site for AMP. Residues Q166, Y204, and S208–S212 contribute to the UMP site. Residues Y204 and D206–S212 contribute to the AMP site. The active-site Proton donor is the H210.

This sequence belongs to the 2H phosphoesterase superfamily. USB1 family. In terms of assembly, interacts with PLRG1, CDC5L and PRPF19.

It is found in the nucleus. It carries out the reaction a 3'-end uridylyl-uridine-RNA = a 3'-end 2',3'-cyclophospho-uridine-RNA + uridine. It catalyses the reaction a 3'-end uridylyl-adenosine-RNA = a 3'-end 2',3'-cyclophospho-uridine-RNA + adenosine. In terms of biological role, 3'-5' RNA exonuclease that trims the 3' end of oligo(U) and oligo(A) tracts of the pre-U6 small nuclear RNA (snRNA) molecule, leading to the formation of a mature U6 snRNA 3' end-terminated with a 2',3'-cyclic phosphate. Participates in the U6 snRNA 3' end processing that prevents U6 snRNA degradation. In addition also removes uridines from the 3' end of U6atac snRNA and possibly the vault RNA VTRNA1-1. The chain is U6 snRNA phosphodiesterase 1 from Mus musculus (Mouse).